Consider the following 303-residue polypeptide: Cysteine synthase B (303 aa).

N6-(pyridoxal phosphate)lysine is present on lysine 41. Pyridoxal 5'-phosphate-binding positions include asparagine 71, glycine 174–threonine 178, and serine 255.

Belongs to the cysteine synthase/cystathionine beta-synthase family. As to quaternary structure, homodimer. The cofactor is pyridoxal 5'-phosphate.

The catalysed reaction is O-acetyl-L-serine + hydrogen sulfide = L-cysteine + acetate. Its pathway is amino-acid biosynthesis; L-cysteine biosynthesis; L-cysteine from L-serine: step 2/2. Its function is as follows. Two cysteine synthase enzymes are found. Both catalyze the same reaction. Cysteine synthase B can also use thiosulfate in place of sulfide to give cysteine thiosulfonate as a product. The protein is Cysteine synthase B (cysM) of Escherichia coli (strain K12).